Consider the following 274-residue polypeptide: MAEVLSAGPESVAGCRARAVHKVLNQVVLPGEELVLPDHEDVDGLGGAGEQPLRLNAGARPRLRVVCGPGLRRCGDRLLVTKCGRLRHKEPSGGGGGVYWVDSQQKRYVPVKGDHVIGIVIAKSGDIFKVDVGGSEPASLSYLAFEGATKRNRPNVQVGDLIYGQCVVANKDMEPEMVCIDSCGRANGMGVIGQDGLLFKVTLGLIRKLLAPDCEIVQELGKLYPLEIVFGMNGRIWVKAKTIQQTLILANVLEACEHMTTEQRKQIFARLAES.

Position 2 is an N-acetylalanine (A2). A Glycyl lysine isopeptide (Lys-Gly) (interchain with G-Cter in SUMO2) cross-link involves residue K150.

Belongs to the RRP40 family. In terms of assembly, component of the RNA exosome core complex (Exo-9), composed of EXOSC1, EXOSC2, EXOSC3, EXOSC4, EXOSC5, EXOSC6, EXOSC7, EXOSC8 and EXOSC9; within the complex interacts with EXOSC5 and EXOSC9. The catalytically inactive RNA exosome core complex (Exo-9) associates with the catalytic subunit EXOSC10/RRP6. Exo-9 may associate with DIS3 to form the nucleolar exosome complex, or DIS3L to form the cytoplasmic exosome complex. Exo-9 is formed by a hexameric base ring consisting of the heterodimers EXOSC4-EXOSC9, EXOSC5-EXOSC8 and EXOSC6-EXOSC7, and a cap ring consisting of EXOSC1, EXOSC2 and EXOSC3. The RNA exosome complex associates with cofactors C1D/RRP47, MPHOSPH6/MPP6 and MTREX/MTR4. Interacts with MPHOSPH6/MPP6; the interaction is direct. Interacts with GTPBP1. Interacts with ZC3HAV1. Interacts with DDX17 only in the presence of ZC3HAV1 in an RNA-independent manner. Interacts with DHX36; this interaction occurs in a RNase-insensitive manner. Interacts with HBS1L isoform 2.

Its subcellular location is the cytoplasm. The protein resides in the nucleus. It localises to the nucleolus. Functionally, non-catalytic component of the RNA exosome complex which has 3'-&gt;5' exoribonuclease activity and participates in a multitude of cellular RNA processing and degradation events. In the nucleus, the RNA exosome complex is involved in proper maturation of stable RNA species such as rRNA, snRNA and snoRNA, in the elimination of RNA processing by-products and non-coding 'pervasive' transcripts, such as antisense RNA species and promoter-upstream transcripts (PROMPTs), and of mRNAs with processing defects, thereby limiting or excluding their export to the cytoplasm. The RNA exosome may be involved in Ig class switch recombination (CSR) and/or Ig variable region somatic hypermutation (SHM) by targeting AICDA deamination activity to transcribed dsDNA substrates. In the cytoplasm, the RNA exosome complex is involved in general mRNA turnover and specifically degrades inherently unstable mRNAs containing AU-rich elements (AREs) within their 3' untranslated regions, and in RNA surveillance pathways, preventing translation of aberrant mRNAs. It seems to be involved in degradation of histone mRNA. The catalytic inactive RNA exosome core complex of 9 subunits (Exo-9) is proposed to play a pivotal role in the binding and presentation of RNA for ribonucleolysis, and to serve as a scaffold for the association with catalytic subunits and accessory proteins or complexes. EXOSC3 as peripheral part of the Exo-9 complex stabilizes the hexameric ring of RNase PH-domain subunits through contacts with EXOSC9 and EXOSC5. The protein is Exosome complex component RRP40 (Exosc3) of Mus musculus (Mouse).